The primary structure comprises 475 residues: Glutamate--tRNA ligase 2 (475 aa).

The 'HIGH' region motif lies at 11–21 (PSPTGFLHIGG). A compositionally biased stretch (basic and acidic residues) spans 116 to 133 (AEGRPPRYDGTWRDKDPA). The tract at residues 116 to 137 (AEGRPPRYDGTWRDKDPAEAPS) is disordered. The short motif at 240 to 244 (KLSKR) is the 'KMSKS' region element. K243 provides a ligand contact to ATP.

The protein belongs to the class-I aminoacyl-tRNA synthetase family. Glutamate--tRNA ligase type 1 subfamily. In terms of assembly, monomer.

The protein resides in the cytoplasm. It carries out the reaction tRNA(Glu) + L-glutamate + ATP = L-glutamyl-tRNA(Glu) + AMP + diphosphate. Functionally, catalyzes the attachment of glutamate to tRNA(Glu) in a two-step reaction: glutamate is first activated by ATP to form Glu-AMP and then transferred to the acceptor end of tRNA(Glu). The sequence is that of Glutamate--tRNA ligase 2 from Chelativorans sp. (strain BNC1).